A 377-amino-acid chain; its full sequence is NIF3-like protein 1 (377 aa).

An N6-acetyllysine modification is found at Lys109. Positions 244 to 377 (LLLHTGMGRL…ETDRDPLQVV (134 aa)) are mediates interaction with COPS2. A Phosphothreonine modification is found at Thr255. At Ser259 the chain carries Phosphoserine.

The protein belongs to the GTP cyclohydrolase I type 2/NIF3 family. As to quaternary structure, homodimer. Interacts with COPS2. Interacts with THOC7.

It localises to the cytoplasm. It is found in the nucleus. May function as a transcriptional corepressor through its interaction with COPS2, negatively regulating the expression of genes involved in neuronal differentiation. The polypeptide is NIF3-like protein 1 (Homo sapiens (Human)).